The following is a 223-amino-acid chain: Transmembrane protein 114 (223 aa).

A helical transmembrane segment spans residues 7–27; it reads GLAGAAALTGALSFVLLAAAI. N-linked (GlcNAc...) asparagine glycans are attached at residues N55 and N89. Helical transmembrane passes span 106-126, 134-154, and 189-209; these read FVIL…TGFL, LLLL…LAGI, and LALG…FLAA.

The protein belongs to the PMP-22/EMP/MP20 family.

The protein resides in the cell junction. It localises to the tight junction. The protein localises to the lateral cell membrane. It is found in the apical cell membrane. This chain is Transmembrane protein 114, found in Homo sapiens (Human).